The sequence spans 564 residues: Dihydroxy-acid dehydratase (564 aa).

Asp-80 serves as a coordination point for Mg(2+). Cys-121 contributes to the [2Fe-2S] cluster binding site. Residues Asp-122 and Lys-123 each contribute to the Mg(2+) site. The residue at position 123 (Lys-123) is an N6-carboxylysine. Cys-194 contacts [2Fe-2S] cluster. Glu-447 is a Mg(2+) binding site. Ser-473 acts as the Proton acceptor in catalysis.

This sequence belongs to the IlvD/Edd family. Homodimer. It depends on [2Fe-2S] cluster as a cofactor. The cofactor is Mg(2+).

The catalysed reaction is (2R)-2,3-dihydroxy-3-methylbutanoate = 3-methyl-2-oxobutanoate + H2O. The enzyme catalyses (2R,3R)-2,3-dihydroxy-3-methylpentanoate = (S)-3-methyl-2-oxopentanoate + H2O. It participates in amino-acid biosynthesis; L-isoleucine biosynthesis; L-isoleucine from 2-oxobutanoate: step 3/4. Its pathway is amino-acid biosynthesis; L-valine biosynthesis; L-valine from pyruvate: step 3/4. Functions in the biosynthesis of branched-chain amino acids. Catalyzes the dehydration of (2R,3R)-2,3-dihydroxy-3-methylpentanoate (2,3-dihydroxy-3-methylvalerate) into 2-oxo-3-methylpentanoate (2-oxo-3-methylvalerate) and of (2R)-2,3-dihydroxy-3-methylbutanoate (2,3-dihydroxyisovalerate) into 2-oxo-3-methylbutanoate (2-oxoisovalerate), the penultimate precursor to L-isoleucine and L-valine, respectively. The sequence is that of Dihydroxy-acid dehydratase from Listeria monocytogenes serotype 4b (strain CLIP80459).